The primary structure comprises 164 residues: Phosphopantetheine adenylyltransferase (164 aa).

S9 is a substrate binding site. ATP-binding positions include 9–10 and H17; that span reads SF. K41, L73, and K87 together coordinate substrate. ATP contacts are provided by residues 88–90, E98, and 123–129; these read GLR and YSYLSSS.

Belongs to the bacterial CoaD family. As to quaternary structure, homohexamer. The cofactor is Mg(2+).

The protein resides in the cytoplasm. The enzyme catalyses (R)-4'-phosphopantetheine + ATP + H(+) = 3'-dephospho-CoA + diphosphate. The protein operates within cofactor biosynthesis; coenzyme A biosynthesis; CoA from (R)-pantothenate: step 4/5. Its function is as follows. Reversibly transfers an adenylyl group from ATP to 4'-phosphopantetheine, yielding dephospho-CoA (dPCoA) and pyrophosphate. In Clostridium botulinum (strain ATCC 19397 / Type A), this protein is Phosphopantetheine adenylyltransferase.